We begin with the raw amino-acid sequence, 463 residues long: MEKALSKTWSDRFDKGLNPFIEKFNASIEFDICLLEEDLDGSIAHARMLGIQGIITKEEALRLENGLQQIRKEASDGLFQPVIADEDVHFAVEKKLIDLIGPVGKKLHTGRSRNDQVGTDLRLWLRKRIDEIDMDLVRLQKSLFLLAEENLYTLIPGYTHLQRAQPLSLAHHLLAYIEMAQRDRNRLKDVRKRVNISPLGAAALAGTSISISRKITSSELHFQGIYSNSLDAVSDRDFVVEFLGASSLIMAHLSRLSEEVILWASEEFAFIQLTDRCATGSSLMPQKKNPDVPELVRGKSGRVFGHLQAMLTMIKGLPLAYNKDFQEDKEAIFDSVKTVKNSLIAISILFEEGLIFRKERLNQAVSSDFSNATDVADYLVAKDIPFREAYQLVGRIVKTSLEEGILLKDFPLERWKTFHKFFEKDIYEKLLPSSVVESRLSAGGTGFERVQEQLLSWREKLFN.

This sequence belongs to the lyase 1 family. Argininosuccinate lyase subfamily.

It localises to the cytoplasm. The catalysed reaction is 2-(N(omega)-L-arginino)succinate = fumarate + L-arginine. The protein operates within amino-acid biosynthesis; L-arginine biosynthesis; L-arginine from L-ornithine and carbamoyl phosphate: step 3/3. The polypeptide is Argininosuccinate lyase (Prochlorococcus marinus (strain NATL1A)).